Consider the following 411-residue polypeptide: Common plant regulatory factor 1 (411 aa).

Residues 1–14 (MGNTDDVKAVKPEK) are compositionally biased toward basic and acidic residues. Disordered regions lie at residues 1 to 30 (MGNTDDVKAVKPEKLSSPPPPAAPDQSNSH), 130 to 197 (AMSI…SSVI), and 232 to 293 (SSLE…KQAE). A compositionally biased stretch (polar residues) spans 148 to 164 (TLSQSKETEGSSDGSNE). Over residues 235–244 (ELKDSPKEHA) the composition is skewed to basic and acidic residues. Residues 249 to 259 (AGGQQPSTMMP) are compositionally biased toward polar residues. Residues 264-293 (LHNDRDLKRERRKQSNRESARRSRLRKQAE) show a composition bias toward basic and acidic residues. The 64-residue stretch at 269–332 (DLKRERRKQS…EKLTNDNSRL (64 aa)) folds into the bZIP domain. Residues 271–290 (KRERRKQSNRESARRSRLRK) form a basic motif region. The interval 297–332 (LAIKVDSLTAENMALKAEINRLTLTAEKLTNDNSRL) is leucine-zipper. The tract at residues 346–411 (DVGLGNNNEK…NPRTDAVAAG (66 aa)) is disordered.

The protein belongs to the bZIP family. Binds DNA as a dimer.

The protein localises to the nucleus. In terms of biological role, binds to the G-box-like motif (5'-ACGTGGC-3') of the chalcone synthase (CHS) gene promoter. G-box and G-box-like motifs are defined in promoters of certain plant genes which are regulated by such diverse stimuli as light-induction or hormone control. This Petroselinum crispum (Parsley) protein is Common plant regulatory factor 1 (CPRF1).